A 443-amino-acid polypeptide reads, in one-letter code: Trigger factor (443 aa).

In terms of domain architecture, PPIase FKBP-type spans 168–254 (GDFVTIDFEG…IKNLKEKKLP (87 aa)).

The protein belongs to the FKBP-type PPIase family. Tig subfamily.

The protein resides in the cytoplasm. It carries out the reaction [protein]-peptidylproline (omega=180) = [protein]-peptidylproline (omega=0). In terms of biological role, involved in protein export. Acts as a chaperone by maintaining the newly synthesized protein in an open conformation. Functions as a peptidyl-prolyl cis-trans isomerase. The sequence is that of Trigger factor from Syntrophus aciditrophicus (strain SB).